We begin with the raw amino-acid sequence, 81 residues long: Cell division protein ZapB (81 aa).

Residues 5–81 (LEVFEKLESK…QALLGRMEEV (77 aa)) adopt a coiled-coil conformation. A disordered region spans residues 43-64 (VHSAQNGREELERENQQLREQQ). A compositionally biased stretch (basic and acidic residues) spans 49–59 (GREELERENQQ).

This sequence belongs to the ZapB family. As to quaternary structure, homodimer. The ends of the coiled-coil dimer bind to each other, forming polymers. Interacts with FtsZ.

It localises to the cytoplasm. Functionally, non-essential, abundant cell division factor that is required for proper Z-ring formation. It is recruited early to the divisome by direct interaction with FtsZ, stimulating Z-ring assembly and thereby promoting cell division earlier in the cell cycle. Its recruitment to the Z-ring requires functional FtsA or ZipA. The chain is Cell division protein ZapB from Enterobacter sp. (strain 638).